Reading from the N-terminus, the 181-residue chain is Adenine phosphoribosyltransferase (181 aa).

The protein belongs to the purine/pyrimidine phosphoribosyltransferase family. Homodimer.

It localises to the cytoplasm. It catalyses the reaction AMP + diphosphate = 5-phospho-alpha-D-ribose 1-diphosphate + adenine. Its pathway is purine metabolism; AMP biosynthesis via salvage pathway; AMP from adenine: step 1/1. Functionally, catalyzes a salvage reaction resulting in the formation of AMP, that is energically less costly than de novo synthesis. The chain is Adenine phosphoribosyltransferase from Rhodopseudomonas palustris (strain ATCC BAA-98 / CGA009).